The primary structure comprises 425 residues: Peroxisomal membrane protein PEX14 (425 aa).

Disordered stretches follow at residues 49 to 89 and 247 to 425; these read RSQG…YRNA and DEPI…AAQS. Residues 56 to 76 show a composition bias toward low complexity; the sequence is SSSVASQVSSYSPSASQSSVA. Residues 89 to 97 carry the SH3-binding motif; the sequence is APPLPERDW. Over residues 256 to 297 the composition is skewed to polar residues; that stretch reads PSLTTGANSLTSESSGRSSIPHSQSVPIRTQLTTPPSDSDTS. Composition is skewed to basic and acidic residues over residues 315–324 and 333–366; these read DILRKEKNRT and LGKD…PEED.

The protein belongs to the peroxin-14 family. In terms of assembly, interacts with PEX13 (via SH3 domain); forming the PEX13-PEX14 docking complex. Interacts with PEX5 (via WxxxF/Y motifs). Interacts with PEX20 (via WxxxF/Y motifs). Interacts with PEX3, PEX7, PEX8 and PEX17. In terms of processing, phosphorylated on serine or threonine residues.

The protein resides in the peroxisome membrane. In terms of biological role, component of the PEX13-PEX14 docking complex, a translocon channel that specifically mediates the import of peroxisomal cargo proteins bound to PEX5 or PEX20 receptors. The PEX13-PEX14 docking complex forms a large import pore which can be opened to a diameter of about 9 nm. Mechanistically, PEX5 (or PEX20) receptor along with cargo proteins associates with the PEX14 subunit of the PEX13-PEX14 docking complex in the cytosol, leading to the insertion of the receptor into the organelle membrane with the concomitant translocation of the cargo into the peroxisome matrix. The sequence is that of Peroxisomal membrane protein PEX14 from Komagataella pastoris (Yeast).